The following is a 325-amino-acid chain: uncharacterized protein (325 aa).

The disordered stretch occupies residues 1–75; sequence MSQPPEHPGN…PPPGYPTHLQ (75 aa). Positions 24-70 are enriched in pro residues; the sequence is YPPPGYGAPPPPPGYGPPPGTYLPPGYNAPPPPPGYGPPPGPPPPGY. 4 consecutive transmembrane segments (helical) span residues 96–116, 153–173, 205–225, and 273–293; these read AVTL…VIGA, IVMF…HAGI, LLIV…GLIF, and LVGE…AALI.

It is found in the cell membrane. This is an uncharacterized protein from Mycobacterium tuberculosis (strain ATCC 25618 / H37Rv).